A 248-amino-acid polypeptide reads, in one-letter code: tRNA (guanine-N(1)-)-methyltransferase (248 aa).

S-adenosyl-L-methionine contacts are provided by residues Gly-113 and 133 to 138; that span reads IGDYVL. A disordered region spans residues 227-248; sequence RPAQTIRAKGESQKTPKNKTDG. Basic and acidic residues predominate over residues 234–248; that stretch reads AKGESQKTPKNKTDG.

Belongs to the RNA methyltransferase TrmD family. As to quaternary structure, homodimer.

It localises to the cytoplasm. The enzyme catalyses guanosine(37) in tRNA + S-adenosyl-L-methionine = N(1)-methylguanosine(37) in tRNA + S-adenosyl-L-homocysteine + H(+). Its function is as follows. Specifically methylates guanosine-37 in various tRNAs. The polypeptide is tRNA (guanine-N(1)-)-methyltransferase (Rhodopseudomonas palustris (strain TIE-1)).